A 132-amino-acid polypeptide reads, in one-letter code: ATP synthase epsilon chain, chloroplastic (132 aa).

The protein belongs to the ATPase epsilon chain family. In terms of assembly, F-type ATPases have 2 components, CF(1) - the catalytic core - and CF(0) - the membrane proton channel. CF(1) has five subunits: alpha(3), beta(3), gamma(1), delta(1), epsilon(1). CF(0) has three main subunits: a, b and c.

It is found in the plastid. Its subcellular location is the chloroplast thylakoid membrane. Functionally, produces ATP from ADP in the presence of a proton gradient across the membrane. The protein is ATP synthase epsilon chain, chloroplastic of Adiantum capillus-veneris (Maidenhair fern).